Here is a 249-residue protein sequence, read N- to C-terminus: Proteasome activator complex subunit 1 (249 aa).

The interval 60 to 102 (PLDIPVPDPVKEKEKEERKKQQEKEDKDEKKKGEDEDKGPPCG) is disordered. Residues 68–98 (PVKEKEKEERKKQQEKEDKDEKKKGEDEDKG) show a composition bias toward basic and acidic residues.

This sequence belongs to the PA28 family. As to quaternary structure, heterodimer of PSME1 and PSME2, which forms a hexameric ring. PSME1 can form homoheptamers.

Functionally, implicated in immunoproteasome assembly and required for efficient antigen processing. The PA28 activator complex enhances the generation of class I binding peptides by altering the cleavage pattern of the proteasome. This chain is Proteasome activator complex subunit 1 (PSME1), found in Homo sapiens (Human).